The sequence spans 425 residues: Serine--tRNA ligase (425 aa).

2 disordered regions span residues 43–69 and 108–134; these read QRSS…SDPK and LPNL…WGKP. Positions 117 to 134 are enriched in basic and acidic residues; that stretch reads PEGRDENDNQERHRWGKP. L-serine is bound at residue 233–235; the sequence is TAE. 264-266 lines the ATP pocket; sequence RRE. An L-serine-binding site is contributed by Glu287. Position 351–354 (351–354) interacts with ATP; it reads EISS. An L-serine-binding site is contributed by Ser385.

This sequence belongs to the class-II aminoacyl-tRNA synthetase family. Type-1 seryl-tRNA synthetase subfamily. In terms of assembly, homodimer. The tRNA molecule binds across the dimer.

It is found in the cytoplasm. The catalysed reaction is tRNA(Ser) + L-serine + ATP = L-seryl-tRNA(Ser) + AMP + diphosphate + H(+). It catalyses the reaction tRNA(Sec) + L-serine + ATP = L-seryl-tRNA(Sec) + AMP + diphosphate + H(+). It participates in aminoacyl-tRNA biosynthesis; selenocysteinyl-tRNA(Sec) biosynthesis; L-seryl-tRNA(Sec) from L-serine and tRNA(Sec): step 1/1. In terms of biological role, catalyzes the attachment of serine to tRNA(Ser). Is also able to aminoacylate tRNA(Sec) with serine, to form the misacylated tRNA L-seryl-tRNA(Sec), which will be further converted into selenocysteinyl-tRNA(Sec). The protein is Serine--tRNA ligase of Prochlorococcus marinus (strain MIT 9313).